We begin with the raw amino-acid sequence, 666 residues long: Frizzled-3 (666 aa).

Positions 1-22 (MAVSWIVFDLWLLTVFLGQIGG) are cleaved as a signal peptide. Residues 23–136 (HSLFSCEPIT…CSRFPDCDEP (114 aa)) enclose the FZ domain. The Extracellular segment spans residues 23–205 (HSLFSCEPIT…REELSFARYF (183 aa)). Cystine bridges form between Cys28–Cys89, Cys36–Cys82, Cys73–Cys110, Cys99–Cys133, and Cys103–Cys127. Asn42 carries N-linked (GlcNAc...) asparagine glycosylation. A helical transmembrane segment spans residues 206 to 226 (IGLISIICLSATLFTFLTFLI). Residues 227–237 (DVTRFRYPERP) lie on the Cytoplasmic side of the membrane. Residues 238 to 258 (IIFYAVCYMMVSLIFFIGFLL) traverse the membrane as a helical segment. The Extracellular portion of the chain corresponds to 259–288 (EDRVACNASSPAQYKASTVTQGSHNKACTM). N-linked (GlcNAc...) asparagine glycosylation is present at Asn265. The helical transmembrane segment at 289-309 (LFMVLYFFTMAGSVWWVILTI) threads the bilayer. Residues 310 to 328 (TWFLAAVPKWGSEAIEKKA) are Cytoplasmic-facing. Residues 329–349 (LLFHASAWGIPGTLTIILLAM) form a helical membrane-spanning segment. The Extracellular portion of the chain corresponds to 350–374 (NKIEGDNISGVCFVGLYDVDALRYF). Residue Asn356 is glycosylated (N-linked (GlcNAc...) asparagine). Residues 375–395 (VLAPLCLYVVVGVSLLLAGII) traverse the membrane as a helical segment. Over 396 to 420 (SLNRVRIEIPLEKENQDKLVKFMIR) the chain is Cytoplasmic. The chain crosses the membrane as a helical span at residues 421-441 (IGVFSILYLVPLLVVIGCYFY). Residues 442–477 (EQAYRGIWETTWIQERCREYHIPCPYQVTQMSRPDL) lie on the Extracellular side of the membrane. Residues 478 to 498 (ILFLMKYLMALIVGIPSIFWV) form a helical membrane-spanning segment. The Cytoplasmic segment spans residues 499-666 (GSKKTCFEWA…RVIEEDGTSA (168 aa)). The short motif at 502-507 (KTCFEW) is the Lys-Thr-X-X-X-Trp motif, mediates interaction with the PDZ domain of Dvl family members element. A disordered region spans residues 538 to 666 (RDPNTPIIRK…RVIEEDGTSA (129 aa)). Residues 550–565 (GTSTQGTSTHASSTQL) show a composition bias toward polar residues. The span at 617–638 (LTDHSRHSSSHRLNEQSRHSSI) shows a compositional bias: basic and acidic residues. Positions 639–656 (RDLSNNPMTHITHGTSMN) are enriched in polar residues.

It belongs to the G-protein coupled receptor Fz/Smo family. As to quaternary structure, interacts with VANGL2. In terms of processing, ubiquitinated by ZNRF3, leading to its degradation by the proteasome. As to expression, expressed in the cortex, diencephalon, rostral brainstem and little or no staining is seen in the striatum or cerebellum. Expressed in both hair cells and supporting cells in the utricle, saccule, cristae and the organ of Corti in the inner ear (at protein level). Highly expressed in the CNS. In skin, it is restricted to the epidermis and to the developing hair follicle.

Its subcellular location is the membrane. It localises to the cell membrane. It is found in the cell surface. The protein localises to the apical cell membrane. In terms of biological role, receptor for Wnt proteins. Most of frizzled receptors are coupled to the beta-catenin canonical signaling pathway, which leads to the activation of disheveled proteins, inhibition of GSK-3 kinase, nuclear accumulation of beta-catenin and activation of Wnt target genes. A second signaling pathway involving PKC and calcium fluxes has been seen for some family members, but it is not yet clear if it represents a distinct pathway or if it can be integrated in the canonical pathway, as PKC seems to be required for Wnt-mediated inactivation of GSK-3 kinase. Both pathways seem to involve interactions with G-proteins. Activation by Wnt5A stimulates PKC activity via a G-protein-dependent mechanism. Involved in transduction and intercellular transmission of polarity information during tissue morphogenesis and/or in differentiated tissues. Plays a role in controlling early axon growth and guidance processes necessary for the formation of a subset of central and peripheral major fiber tracts. Required for the development of major fiber tracts in the central nervous system, including: the anterior commissure, the corpus callosum, the thalamocortical, corticothalamic and nigrostriatal tracts, the corticospinal tract, the fasciculus retroflexus, the mammillothalamic tract, the medial lemniscus, and ascending fiber tracts from the spinal cord to the brain. In the peripheral nervous system, controls axon growth in distinct populations of cranial and spinal motor neurons, including the facial branchimotor nerve, the hypoglossal nerve, the phrenic nerve, and motor nerves innervating dorsal limbs. Involved in the migration of cranial neural crest cells. May also be implicated in the transmission of sensory information from the trunk and limbs to the brain. Controls commissural sensory axons guidance after midline crossing along the anterior-posterior axis in the developing spinal cord in a Wnt-dependent signaling pathway. Together with FZD6, is involved in the neural tube closure and plays a role in the regulation of the establishment of planar cell polarity (PCP), particularly in the orientation of asymmetric bundles of stereocilia on the apical faces of a subset of auditory and vestibular sensory cells located in the inner ear. Promotes neurogenesis by maintaining sympathetic neuroblasts within the cell cycle in a beta-catenin-dependent manner. The protein is Frizzled-3 (Fzd3) of Mus musculus (Mouse).